Here is a 158-residue protein sequence, read N- to C-terminus: Cyclic pyranopterin monophosphate synthase (158 aa).

Residues 76–78 (LCH) and 114–115 (ME) each bind substrate. Asp129 is a catalytic residue.

The protein belongs to the MoaC family. As to quaternary structure, homohexamer; trimer of dimers.

It carries out the reaction (8S)-3',8-cyclo-7,8-dihydroguanosine 5'-triphosphate = cyclic pyranopterin phosphate + diphosphate. It functions in the pathway cofactor biosynthesis; molybdopterin biosynthesis. Functionally, catalyzes the conversion of (8S)-3',8-cyclo-7,8-dihydroguanosine 5'-triphosphate to cyclic pyranopterin monophosphate (cPMP). The protein is Cyclic pyranopterin monophosphate synthase of Shewanella woodyi (strain ATCC 51908 / MS32).